A 418-amino-acid chain; its full sequence is Inhibitor of growth protein 3 (418 aa).

A disordered region spans residues 127 to 165 (DTPSQPVNNHHAHSHTPVEKRKYNPTSHHTTTDHIPEKK). Glycyl lysine isopeptide (Lys-Gly) (interchain with G-Cter in SUMO2) cross-links involve residues lysine 148, lysine 165, and lysine 167. Residues 156–165 (TTTDHIPEKK) show a composition bias toward basic and acidic residues. N6-acetyllysine is present on lysine 181. Lysine 256 is covalently cross-linked (Glycyl lysine isopeptide (Lys-Gly) (interchain with G-Cter in SUMO2)). Position 264 is an N6-acetyllysine (lysine 264). Positions 286 to 325 (TQNASSSAADSRSGRKSKNNNKSSSQQSSSSSSSSSLSSC) are disordered. The segment covering 305-325 (NNKSSSQQSSSSSSSSSLSSC) has biased composition (low complexity). A PHD-type zinc finger spans residues 360–409 (PRYCICNQVSYGEMVGCDNQDCPIEWFHYGCVGLTEAPKGKWYCPQCTAA). Residues cysteine 363, cysteine 365, cysteine 376, cysteine 381, histidine 387, cysteine 390, cysteine 403, and cysteine 406 each coordinate Zn(2+).

Belongs to the ING family. As to quaternary structure, interacts with H3K4me3 and to a lesser extent with H3K4me2. Component of the NuA4 histone acetyltransferase complex which contains the catalytic subunit KAT5/TIP60 and the subunits EP400, TRRAP/PAF400, BRD8/SMAP, EPC1, DMAP1/DNMAP1, RUVBL1/TIP49, RUVBL2, ING3, actin, ACTL6A/BAF53A, MORF4L1/MRG15, MORF4L2/MRGX, MRGBP, YEATS4/GAS41, VPS72/YL1 and MEAF6. The NuA4 complex interacts with MYC and the adenovirus E1A protein. HTATTIP/TIP60, EPC1, and ING3 together constitute a minimal HAT complex termed Piccolo NuA4. Component of a SWR1-like complex. In terms of tissue distribution, expressed in brain, heart, kidney, liver, lung, ovaries, placenta, prostate, skeletal muscle, small intestine, spleen, testis and thymus.

It localises to the nucleus. Component of the NuA4 histone acetyltransferase (HAT) complex which is involved in transcriptional activation of select genes principally by acetylation of nucleosomal histones H4 and H2A. This modification may both alter nucleosome - DNA interactions and promote interaction of the modified histones with other proteins which positively regulate transcription. This complex may be required for the activation of transcriptional programs associated with oncogene and proto-oncogene mediated growth induction, tumor suppressor mediated growth arrest and replicative senescence, apoptosis, and DNA repair. NuA4 may also play a direct role in DNA repair when directly recruited to sites of DNA damage. Component of a SWR1-like complex that specifically mediates the removal of histone H2A.Z/H2AZ1 from the nucleosome. This chain is Inhibitor of growth protein 3 (ING3), found in Homo sapiens (Human).